Here is a 341-residue protein sequence, read N- to C-terminus: S-adenosylmethionine:tRNA ribosyltransferase-isomerase (341 aa).

It belongs to the QueA family. In terms of assembly, monomer.

The protein resides in the cytoplasm. The enzyme catalyses 7-aminomethyl-7-carbaguanosine(34) in tRNA + S-adenosyl-L-methionine = epoxyqueuosine(34) in tRNA + adenine + L-methionine + 2 H(+). It participates in tRNA modification; tRNA-queuosine biosynthesis. In terms of biological role, transfers and isomerizes the ribose moiety from AdoMet to the 7-aminomethyl group of 7-deazaguanine (preQ1-tRNA) to give epoxyqueuosine (oQ-tRNA). The sequence is that of S-adenosylmethionine:tRNA ribosyltransferase-isomerase from Chlorobium phaeovibrioides (strain DSM 265 / 1930) (Prosthecochloris vibrioformis (strain DSM 265)).